Reading from the N-terminus, the 784-residue chain is Toll-like receptor 2 (784 aa).

The signal sequence occupies residues 1–20; sequence MPRALWTAWVWAVISVFTEG. The Extracellular segment spans residues 21–587; the sequence is ASDQASSLSC…ARLSLSECHR (567 aa). A disulfide bond links C30 and C36. LRR repeat units follow at residues 54-77, 78-101, 102-125, 126-150, 151-175, 176-199, 200-223, 224-250, 251-278, 279-308, 309-337, 338-361, 362-388, 389-414, 415-437, 438-457, 458-478, 479-500, and 501-524; these read VKSL…RCVN, LKTL…HLRN, LEYL…SLYV, LKFL…HLPN, LRTL…GLTF, LEEL…SIQN, ISHL…IVSS, LDYL…INTS, VKKL…YVSG, ILEV…YLGN, VETL…LTGK, VKRV…HLKS, LEYL…AWPV, LQTL…TLKN, LNNL…WPGK, MKQL…CLPQ, TLEI…ILPQ, LKEL…FLPV, and LSVM…SFPQ. N114 carries N-linked (GlcNAc...) asparagine glycosylation. A glycan (N-linked (GlcNAc...) asparagine) is linked at N199. N-linked (GlcNAc...) asparagine glycosylation occurs at N248. A disulfide bridge links C353 with C382. A disulfide bond links C432 and C454. N442 is a glycosylation site (N-linked (GlcNAc...) asparagine). The 55-residue stretch at 525–579 folds into the LRRCT domain; it reads LKALEAGGNNFICSCDFLSFAQGQQALARVLVDWPDGYRCDAPSHVRGQRVQDAR. The chain crosses the membrane as a helical span at residues 588–608; sequence AAVVSAVCCALFLLLLLTGVL. Residues 609 to 784 are Cytoplasmic-facing; it reads CHRFHGLWYM…WLNLRAAIRS (176 aa). One can recognise a TIR domain in the interval 639 to 782; sequence LCYDAFVSYS…AFWLNLRAAI (144 aa). Residue K754 forms a Glycyl lysine isopeptide (Lys-Gly) (interchain with G-Cter in ubiquitin) linkage. An ATG16L1-binding motif motif is present at residues 761 to 778; it reads YLEWPTDETHREAFWLNL.

It belongs to the Toll-like receptor family. Interacts with LY96, TLR1 and TLR6 (via extracellular domain). TLR2 seems to exist in heterodimers with either TLR1 or TLR6 before stimulation by the ligand. The heterodimers form bigger oligomers in response to their corresponding ligands as well as further heterotypic associations with other receptors such as CD14 and/or CD36. Binds MYD88 (via TIR domain). Interacts with TICAM1. Interacts with CNPY3. Interacts with ATG16L1. Interacts with PPP1R11. Interacts with TICAM2. Interacts with TIRAP. Ubiquitinated at Lys-754 by PPP1R11, leading to its degradation. Deubiquitinated by USP2. Post-translationally, glycosylation of Asn-442 is critical for secretion of the N-terminal ectodomain of TLR2.

It localises to the membrane. Its subcellular location is the cytoplasmic vesicle. The protein resides in the phagosome membrane. The protein localises to the membrane raft. Cooperates with LY96 to mediate the innate immune response to bacterial lipoproteins and other microbial cell wall components. Cooperates with TLR1 or TLR6 to mediate the innate immune response to bacterial lipoproteins or lipopeptides. Acts via MYD88 and TRAF6, leading to NF-kappa-B activation, cytokine secretion and the inflammatory response. May also promote apoptosis in response to lipoproteins. Forms activation clusters composed of several receptors depending on the ligand, these clusters trigger signaling from the cell surface and subsequently are targeted to the Golgi in a lipid-raft dependent pathway. Forms the cluster TLR2:TLR6:CD14:CD36 in response to diacylated lipopeptides and TLR2:TLR1:CD14 in response to triacylated lipopeptides. The protein is Toll-like receptor 2 (TLR2) of Ovis aries (Sheep).